A 306-amino-acid polypeptide reads, in one-letter code: Pantothenate kinase (306 aa).

Residue 91 to 98 (GSVAVGKS) participates in ATP binding.

The protein belongs to the prokaryotic pantothenate kinase family.

Its subcellular location is the cytoplasm. The enzyme catalyses (R)-pantothenate + ATP = (R)-4'-phosphopantothenate + ADP + H(+). Its pathway is cofactor biosynthesis; coenzyme A biosynthesis; CoA from (R)-pantothenate: step 1/5. The chain is Pantothenate kinase (coaA) from Streptococcus pyogenes serotype M18 (strain MGAS8232).